The sequence spans 1670 residues: MSARTAPRPQVLLLPLLLVLLAAAPAASKGCVCKDKGQCFCDGAKGEKGEKGFPGPPGSPGQKGFTGPEGLPGPQGPKGFPGLPGLTGSKGVRGISGLPGFSGSPGLPGTPGNTGPYGLVGVPGCSGSKGEQGFPGLPGTLGYPGIPGAAGLKGQKGAPAKEEDIELDAKGDPGLPGAPGPQGLPGPPGFPGPVGPPGPPGFFGFPGAMGPRGPKGHMGERVIGHKGERGVKGLTGPPGPPGTVIVTLTGPDNRTDLKGEKGDKGAMGEPGPPGPSGLPGESYGSEKGAPGDPGLQGKPGKDGVPGFPGSEGVKGNRGFPGLMGEDGIKGQKGDIGPPGFRGPTEYYDTYQEKGDEGTPGPPGPRGARGPQGPSGPPGVPGSPGSSRPGLRGAPGWPGLKGSKGERGRPGKDAMGTPGSPGCAGSPGLPGSPGPPGPPGDIVFRKGPPGDHGLPGYLGSPGIPGVDGPKGEPGLLCTQCPYIPGPPGLPGLPGLHGVKGIPGRQGAAGLKGSPGSPGNTGLPGFPGFPGAQGDPGLKGEKGETLQPEGQVGVPGDPGLRGQPGRKGLDGIPGTPGVKGLPGPKGELALSGEKGDQGPPGDPGSPGSPGPAGPAGPPGYGPQGEPGLQGTQGVPGAPGPPGEAGPRGELSVSTPVPGPPGPPGPPGHPGPQGPPGIPGSLGKCGDPGLPGPDGEPGIPGIGFPGPPGPKGDQGFPGTKGSLGCPGKMGEPGLPGKPGLPGAKGEPAVAMPGGPGTPGFPGERGNSGEHGEIGLPGLPGLPGTPGNEGLDGPRGDPGQPGPPGEQGPPGRCIEGPRGAQGLPGLNGLKGQQGRRGKTGPKGDPGIPGLDRSGFPGETGSPGIPGHQGEMGPLGQRGYPGNPGILGPPGEDGVIGMMGFPGAIGPPGPPGNPGTPGQRGSPGIPGVKGQRGTPGAKGEQGDKGNPGPSEISHVIGDKGEPGLKGFAGNPGEKGNRGVPGMPGLKGLKGLPGPAGPPGPRGDLGSTGNPGEPGLRGIPGSMGNMGMPGSKGKRGTLGFPGRAGRPGLPGIHGLQGDKGEPGYSEGTRPGPPGPTGDPGLPGDMGKKGEMGQPGPPGHLGPAGPEGAPGSPGSPGLPGKPGPHGDLGFKGIKGLLGPPGIRGPPGLPGFPGSPGPMGIRGDQGRDGIPGPAGEKGETGLLRAPPGPRGNPGAQGAKGDRGAPGFPGLPGRKGAMGDAGPRGPTGIEGFPGPPGLPGAIIPGQTGNRGPPGSRGSPGAPGPPGPPGSHVIGIKGDKGSMGHPGPKGPPGTAGDMGPPGRLGAPGTPGLPGPRGDPGFQGFPGVKGEKGNPGFLGSIGPPGPIGPKGPPGVRGDPGTLKIISLPGSPGPPGTPGEPGMQGEPGPPGPPGNLGPCGPRGKPGKDGKPGTPGPAGEKGNKGSKGEPGPAGSDGLPGLKGKRGDSGSPATWTTRGFVFTRHSQTTAIPSCPEGTVPLYSGFSFLFVQGNQRAHGQDLGTLGSCLQRFTTMPFLFCNVNDVCNFASRNDYSYWLSTPALMPMNMAPITGRALEPYISRCTVCEGPAIAIAVHSQTTDIPPCPHGWISLWKGFSFIMFTSAGSEGTGQALASPGSCLEEFRASPFLECHGRGTCNYYSNSYSFWLASLNPERMFRKPIPSTVKAGELEKIISRCQVCMKKRH.

Positions 1 to 28 are cleaved as a signal peptide; it reads MSARTAPRPQVLLLPLLLVLLAAAPAAS. Positions 29–42 are 7S domain; the sequence is KGCVCKDKGQCFCD. The tract at residues 43 to 1438 is triple-helical region; it reads GAKGEKGEKG…KGKRGDSGSP (1396 aa). 3 disordered regions span residues 49 to 78, 167 to 469, and 502 to 1442; these read GEKG…QGPK, LDAK…DGPK, and GRQG…ATWT. Pro residues predominate over residues 176–200; the sequence is PGAPGPQGLPGPPGFPGPVGPPGPP. Positions 202-212 are enriched in low complexity; that stretch reads FFGFPGAMGPR. The segment covering 217-231 has biased composition (basic and acidic residues); that stretch reads HMGERVIGHKGERGV. The span at 242–251 shows a compositional bias: low complexity; the sequence is GTVIVTLTGP. A glycan (N-linked (GlcNAc...) asparagine) is linked at Asn-253. A compositionally biased stretch (basic and acidic residues) spans 253-266; it reads NRTDLKGEKGDKGA. Positions 382 to 394 are enriched in low complexity; it reads SPGSSRPGLRGAP. Residues 402–411 are compositionally biased toward basic and acidic residues; sequence SKGERGRPGK. A compositionally biased stretch (low complexity) spans 415–428; the sequence is GTPGSPGCAGSPGL. 3 stretches are compositionally biased toward pro residues: residues 429–438, 598–618, and 654–675; these read PGSPGPPGPP, PGDP…PPGY, and VPGP…PPGI. Positions 791 to 793 match the Cell attachment site motif; that stretch reads RGD. Pro residues predominate over residues 900 to 909; it reads IGPPGPPGNP. Positions 974 to 987 are enriched in low complexity; that stretch reads VPGMPGLKGLKGLP. Residues 996–998 carry the Cell attachment site motif; it reads RGD. Low complexity-rich tracts occupy residues 1013-1025, 1094-1105, and 1118-1133; these read IPGS…MPGS, LGPAGPEGAPGS, and HGDL…LGPP. The span at 1135-1148 shows a compositional bias: pro residues; the sequence is IRGPPGLPGFPGSP. The Cell attachment site motif lies at 1154 to 1156; that stretch reads RGD. Composition is skewed to low complexity over residues 1230 to 1250 and 1290 to 1299; these read PGAI…RGSP and PPGRLGAPGT. A Cell attachment site motif is present at residues 1306 to 1308; that stretch reads RGD. Over residues 1332-1341 the composition is skewed to pro residues; the sequence is PPGPIGPKGP. 2 consecutive short sequence motifs (cell attachment site) follow at residues 1345-1347 and 1432-1434; these read RGD. The segment at 1427-1444 is epitope recognized by Goodpasture antibodies; the sequence is GLKGKRGDSGSPATWTTR. Residues 1445–1669 enclose the Collagen IV NC1 domain; it reads GFVFTRHSQT…SRCQVCMKKR (225 aa). Disulfide bonds link Cys-1460–Cys-1551, Cys-1493–Cys-1548, Cys-1505–Cys-1511, Cys-1570–Cys-1665, Cys-1604–Cys-1662, and Cys-1616–Cys-1622. The required for the anti-angiogenic activity of tumstatin stretch occupies residues 1479–1557; sequence NQRAHGQDLG…CTVCEGPAIA (79 aa). Residue Met-1533 forms an S-Lysyl-methionine sulfilimine (Met-Lys) (interchain with K-1651) linkage. Residues 1610-1628 form a required for the anti-tumor cell activity of tumstatin region; sequence ASPFLECHGRGTCNYYSNS. Lys-1651 participates in a covalent cross-link: S-Lysyl-methionine sulfilimine (Lys-Met) (interchain with M-1533).

It belongs to the type IV collagen family. There are six type IV collagen isoforms, alpha 1(IV)-alpha 6(IV), each of which can form a triple helix structure with 2 other chains to generate type IV collagen network. The alpha 3(IV) chain forms a triple helical protomer with alpha 4(IV) and alpha 5(IV); this triple helical structure dimerizes through NC1-NC1 domain interactions such that the alpha 3(IV), alpha 4(IV) and alpha 5(IV) chains of one protomer connect with the alpha 5(IV), alpha 4(IV) and alpha 3(IV) chains of the opposite promoter, respectively. Interacts with ITGB3. Associates with LAMB2 at the neuromuscular junction and in GBM. Post-translationally, prolines at the third position of the tripeptide repeating unit (G-X-Y) are hydroxylated in some or all of the chains. Isoform 2 contains an additional N-linked glycosylation site. In terms of processing, type IV collagens contain numerous cysteine residues which are involved in inter- and intramolecular disulfide bonding. 12 of these, located in the NC1 domain, are conserved in all known type IV collagens. Post-translationally, the trimeric structure of the NC1 domains is stabilized by covalent bonds between Lys and Met residues. Phosphorylated. Thought to be phosphorylated by CERT, but CERT does not have kinase activity. As to expression, alpha 3 and alpha 4 type IV collagens are colocalized and present in kidney, eye, basement membranes of lens capsule, cochlea, lung, skeletal muscle, aorta, synaptic fibers, fetal kidney and fetal lung. PubMed:8083201 reports similar levels of expression of alpha 3 and alpha 4 type IV collagens in kidney, but PubMed:7523402 reports that in kidney levels of alpha 3 type IV collagen are significantly lower than those of alpha 4 type IV collagen. According to PubMed:8083201, alpha 3 type IV collagen is not detected in heart, brain, placenta, liver, pancreas, extrasynaptic muscle fibers, endoneurial and perineurial nerves, fetal brain, fetal heart and fetal liver. According to PubMed:7523402, alpha 3 type IV collagen is strongly expressed in pancreas, neuroretina and calvaria and not expressed in adrenal, ileum and skin. Isoform 1 and isoform 3 are strongly expressed in kidney, lung, suprarenal capsule, muscle and spleen, in each of these tissues isoform 1 is more abundant than isoform 3. Isoform 1 and isoform 3 are expressed at low levels in artery, fat, pericardium and peripherical nerve, but not in placenta, mesangium, skin, pleura and cultured umbilical endothelial cells.

The protein resides in the secreted. The protein localises to the extracellular space. It localises to the extracellular matrix. Its subcellular location is the basement membrane. Its function is as follows. Type IV collagen is the major structural component of glomerular basement membranes (GBM), forming a 'chicken-wire' meshwork together with laminins, proteoglycans and entactin/nidogen. Tumstatin, a cleavage fragment corresponding to the collagen alpha 3(IV) NC1 domain, possesses both anti-angiogenic and anti-tumor cell activity; these two anti-tumor properties may be regulated via RGD-independent ITGB3-mediated mechanisms. The protein is Collagen alpha-3(IV) chain (COL4A3) of Homo sapiens (Human).